Consider the following 312-residue polypeptide: Methionyl-tRNA formyltransferase (312 aa).

A (6S)-5,6,7,8-tetrahydrofolate-binding site is contributed by S109–P112.

It belongs to the Fmt family.

The enzyme catalyses L-methionyl-tRNA(fMet) + (6R)-10-formyltetrahydrofolate = N-formyl-L-methionyl-tRNA(fMet) + (6S)-5,6,7,8-tetrahydrofolate + H(+). Attaches a formyl group to the free amino group of methionyl-tRNA(fMet). The formyl group appears to play a dual role in the initiator identity of N-formylmethionyl-tRNA by promoting its recognition by IF2 and preventing the misappropriation of this tRNA by the elongation apparatus. This chain is Methionyl-tRNA formyltransferase, found in Geotalea daltonii (strain DSM 22248 / JCM 15807 / FRC-32) (Geobacter daltonii).